The chain runs to 213 residues: MKSLQALFGGTFDPVHYGHLKPVETLANLIGLSRVIIMPNNVPPHRPQPEASSAQRKYMLELAIADKPLFILDERELKRDTASYTAQTLKEWREEQGPDAPLAFIIGQDSLLTFPTWHDYETILDNTHLIVCRRPGYPLEMVKEQHQQWLERHLTHTPDDLHALPAGKIYLAETPWFNISATLIRERLEKGEPCDDLMPESVLNYINQQGLYR.

The protein belongs to the NadD family.

It carries out the reaction nicotinate beta-D-ribonucleotide + ATP + H(+) = deamido-NAD(+) + diphosphate. It functions in the pathway cofactor biosynthesis; NAD(+) biosynthesis; deamido-NAD(+) from nicotinate D-ribonucleotide: step 1/1. In terms of biological role, catalyzes the reversible adenylation of nicotinate mononucleotide (NaMN) to nicotinic acid adenine dinucleotide (NaAD). The polypeptide is Probable nicotinate-nucleotide adenylyltransferase (Citrobacter koseri (strain ATCC BAA-895 / CDC 4225-83 / SGSC4696)).